The primary structure comprises 293 residues: Succinate--CoA ligase [ADP-forming] subunit alpha (293 aa).

CoA contacts are provided by residues 21 to 24 (TGKQ), Lys47, and 99 to 101 (ITE). Tyr162 contacts substrate. The active-site Tele-phosphohistidine intermediate is His249.

The protein belongs to the succinate/malate CoA ligase alpha subunit family. In terms of assembly, heterotetramer of two alpha and two beta subunits.

It carries out the reaction succinate + ATP + CoA = succinyl-CoA + ADP + phosphate. The catalysed reaction is GTP + succinate + CoA = succinyl-CoA + GDP + phosphate. It functions in the pathway carbohydrate metabolism; tricarboxylic acid cycle; succinate from succinyl-CoA (ligase route): step 1/1. Its function is as follows. Succinyl-CoA synthetase functions in the citric acid cycle (TCA), coupling the hydrolysis of succinyl-CoA to the synthesis of either ATP or GTP and thus represents the only step of substrate-level phosphorylation in the TCA. The alpha subunit of the enzyme binds the substrates coenzyme A and phosphate, while succinate binding and nucleotide specificity is provided by the beta subunit. The chain is Succinate--CoA ligase [ADP-forming] subunit alpha from Methanothermobacter thermautotrophicus (strain ATCC 29096 / DSM 1053 / JCM 10044 / NBRC 100330 / Delta H) (Methanobacterium thermoautotrophicum).